We begin with the raw amino-acid sequence, 385 residues long: DNA replication and repair protein RecF (385 aa).

30-37 is a binding site for ATP; the sequence is GPNGFGKT.

It belongs to the RecF family.

It is found in the cytoplasm. The RecF protein is involved in DNA metabolism; it is required for DNA replication and normal SOS inducibility. RecF binds preferentially to single-stranded, linear DNA. It also seems to bind ATP. The sequence is that of DNA replication and repair protein RecF from Mycobacterium marinum (strain ATCC BAA-535 / M).